Consider the following 118-residue polypeptide: Large ribosomal subunit protein bL20 (118 aa).

It belongs to the bacterial ribosomal protein bL20 family.

In terms of biological role, binds directly to 23S ribosomal RNA and is necessary for the in vitro assembly process of the 50S ribosomal subunit. It is not involved in the protein synthesizing functions of that subunit. In Francisella philomiragia subsp. philomiragia (strain ATCC 25017 / CCUG 19701 / FSC 153 / O#319-036), this protein is Large ribosomal subunit protein bL20.